Consider the following 202-residue polypeptide: Protein EMBRYO DEFECTIVE 514 (202 aa).

Disordered stretches follow at residues 1-69 and 168-202; these read MAEE…PVKL and MKTPGANGNGHGGGRGGGGGRRGGRGGGRGGRFRR. The residue at position 2 (Ala2) is an N-acetylalanine. Basic and acidic residues-rich tracts occupy residues 33–42 and 51–65; these read ETGDEKRERE and GESKKQKVGEEEKSG. The segment covering 174 to 202 has biased composition (gly residues); it reads NGNGHGGGRGGGGGRRGGRGGGRGGRFRR.

As to expression, expressed in leaves, flowers and embryos at globular stage.

It is found in the nucleus. Functionally, may play a role in ribosome biogenesis and in determining the rate of cell division. Involved in a process essential for nuclear and nucleolar functions. This chain is Protein EMBRYO DEFECTIVE 514, found in Arabidopsis thaliana (Mouse-ear cress).